We begin with the raw amino-acid sequence, 352 residues long: Phosphoribosylformylglycinamidine cyclo-ligase (352 aa).

Belongs to the AIR synthase family.

Its subcellular location is the cytoplasm. It catalyses the reaction 2-formamido-N(1)-(5-O-phospho-beta-D-ribosyl)acetamidine + ATP = 5-amino-1-(5-phospho-beta-D-ribosyl)imidazole + ADP + phosphate + H(+). The protein operates within purine metabolism; IMP biosynthesis via de novo pathway; 5-amino-1-(5-phospho-D-ribosyl)imidazole from N(2)-formyl-N(1)-(5-phospho-D-ribosyl)glycinamide: step 2/2. The polypeptide is Phosphoribosylformylglycinamidine cyclo-ligase (Stenotrophomonas maltophilia (strain R551-3)).